The sequence spans 248 residues: MTTLFISDLHLDPSRPEITDLFLRFLREQAPGADALYILGDLFEAWIGDDTPSPAADAVADALKVLSDSGVPVYFIRGNRDFLLGEDYARRAGLRILPDPCMIDLYGRPVLLQHGDLLCTDDIPYQQFRAQTRDPAFQAQFLSQPLAARIAFAQKAREASQARQSEMKQGDRAQFETVTDVAPSEVDATFARHGVDTMIHGHTHRPAIHSLQAGGRACTRIVLGDWYEQGSVLRVDAGGWSLDTLARE.

The Mn(2+) site is built by D8, H10, D41, N79, and H114. 79-80 provides a ligand contact to substrate; the sequence is NR. Residues D122, S160, D171, Q174, and H202 each contribute to the substrate site. Mn(2+)-binding residues include H202 and H204.

Belongs to the LpxH family. The cofactor is Mn(2+).

Its subcellular location is the cell inner membrane. It carries out the reaction UDP-2-N,3-O-bis[(3R)-3-hydroxytetradecanoyl]-alpha-D-glucosamine + H2O = 2-N,3-O-bis[(3R)-3-hydroxytetradecanoyl]-alpha-D-glucosaminyl 1-phosphate + UMP + 2 H(+). The protein operates within glycolipid biosynthesis; lipid IV(A) biosynthesis; lipid IV(A) from (3R)-3-hydroxytetradecanoyl-[acyl-carrier-protein] and UDP-N-acetyl-alpha-D-glucosamine: step 4/6. In terms of biological role, hydrolyzes the pyrophosphate bond of UDP-2,3-diacylglucosamine to yield 2,3-diacylglucosamine 1-phosphate (lipid X) and UMP by catalyzing the attack of water at the alpha-P atom. Involved in the biosynthesis of lipid A, a phosphorylated glycolipid that anchors the lipopolysaccharide to the outer membrane of the cell. In Stenotrophomonas maltophilia (strain K279a), this protein is UDP-2,3-diacylglucosamine hydrolase.